The sequence spans 327 residues: Glycerol-3-phosphate dehydrogenase [NAD(P)+] (327 aa).

NADPH-binding residues include F14, R35, and K108. Sn-glycerol 3-phosphate-binding residues include K108 and G136. Residue A140 coordinates NADPH. Residues K191, D244, S254, R255, and N256 each contribute to the sn-glycerol 3-phosphate site. The active-site Proton acceptor is K191. R255 provides a ligand contact to NADPH. NADPH is bound by residues L275 and E277.

This sequence belongs to the NAD-dependent glycerol-3-phosphate dehydrogenase family.

It is found in the cytoplasm. It carries out the reaction sn-glycerol 3-phosphate + NAD(+) = dihydroxyacetone phosphate + NADH + H(+). The catalysed reaction is sn-glycerol 3-phosphate + NADP(+) = dihydroxyacetone phosphate + NADPH + H(+). It participates in membrane lipid metabolism; glycerophospholipid metabolism. In terms of biological role, catalyzes the reduction of the glycolytic intermediate dihydroxyacetone phosphate (DHAP) to sn-glycerol 3-phosphate (G3P), the key precursor for phospholipid synthesis. This Agrobacterium fabrum (strain C58 / ATCC 33970) (Agrobacterium tumefaciens (strain C58)) protein is Glycerol-3-phosphate dehydrogenase [NAD(P)+].